Reading from the N-terminus, the 229-residue chain is Aquaporin Z (229 aa).

2 helical membrane-spanning segments follow: residues 8–28 and 33–53; these read FFGT…AAGV and IGYL…AYAI. Residues 62–64 carry the NPA 1 motif; it reads NPA. A run of 3 helical transmembrane segments spans residues 81-101, 131-151, and 158-178; these read LPYV…LYLI, AALV…LGAT, and GFAP…SIPV. The NPA 2 signature appears at 184-186; the sequence is NPA. The chain crosses the membrane as a helical span at residues 199 to 219; it reads AVSQLWLFWVAPILGAVLGAL.

The protein belongs to the MIP/aquaporin (TC 1.A.8) family. Homotetramer.

It is found in the cell inner membrane. It catalyses the reaction H2O(in) = H2O(out). Its function is as follows. Channel that permits osmotically driven movement of water in both directions. It is involved in the osmoregulation and in the maintenance of cell turgor during volume expansion in rapidly growing cells. It mediates rapid entry or exit of water in response to abrupt changes in osmolarity. The protein is Aquaporin Z of Pseudomonas aeruginosa (strain ATCC 15692 / DSM 22644 / CIP 104116 / JCM 14847 / LMG 12228 / 1C / PRS 101 / PAO1).